Reading from the N-terminus, the 130-residue chain is Small ribosomal subunit protein uS9 (130 aa).

Belongs to the universal ribosomal protein uS9 family.

This is Small ribosomal subunit protein uS9 from Salmonella paratyphi C (strain RKS4594).